Consider the following 477-residue polypeptide: MKVLHVCSELYPLLKTGGLADVLGALPAAQKEIGLDARILIPAYPAISAGIPDTGVVAEFHNSAAGHVVLRYGEFNGVGVYLIDAPNLYAREGNPYHDQWYNDYADNYKRFALLGWVGAELATGLDPWWMAEVVHAHDWHAGLTSAYLAYKGRPAKSVFTIHNLAYQGLFAYHHLFEIGLPTSMFNVNGLEFYGQISYLKAGLYYSDAVTAVSPTYAREITTPEFAYGFEGLLSTLHSQGKLVGILNGVDDNIWNPNTDGYIQDHYKLKSMTGKKKNKAALQAHFNLPEKPDALLFVMITRLTEQKGVDLLIQSAENIIKQGGQLALLGSGAPSLESALLGLAHKHPKNIAVKIGYDEPLSHLMVAGGDVILVPSRFEPCGLTQLYGLKYGTLPLVRQTGGLADTVVDSTAENIKERRATGFVFNEANSQALSHAISRAFSLWKKQRTWFTVRTVAMEQDFSWQISARRYEELYRRI.

K15 contacts ADP-alpha-D-glucose.

It belongs to the glycosyltransferase 1 family. Bacterial/plant glycogen synthase subfamily.

The catalysed reaction is [(1-&gt;4)-alpha-D-glucosyl](n) + ADP-alpha-D-glucose = [(1-&gt;4)-alpha-D-glucosyl](n+1) + ADP + H(+). Its pathway is glycan biosynthesis; glycogen biosynthesis. Its function is as follows. Synthesizes alpha-1,4-glucan chains using ADP-glucose. The protein is Glycogen synthase of Mannheimia succiniciproducens (strain KCTC 0769BP / MBEL55E).